The sequence spans 261 residues: Zinc import ATP-binding protein ZnuC (261 aa).

Residues isoleucine 6–glutamine 227 form the ABC transporter domain. Glycine 38–serine 45 lines the ATP pocket.

The protein belongs to the ABC transporter superfamily. Zinc importer (TC 3.A.1.15.5) family. In terms of assembly, the complex is composed of two ATP-binding proteins (ZnuC), two transmembrane proteins (ZnuB) and a solute-binding protein (ZnuA).

The protein resides in the cell inner membrane. The catalysed reaction is Zn(2+)(out) + ATP(in) + H2O(in) = Zn(2+)(in) + ADP(in) + phosphate(in) + H(+)(in). In terms of biological role, part of the ABC transporter complex ZnuABC involved in zinc import. Responsible for energy coupling to the transport system. This Saccharophagus degradans (strain 2-40 / ATCC 43961 / DSM 17024) protein is Zinc import ATP-binding protein ZnuC.